Reading from the N-terminus, the 302-residue chain is 4-diphosphocytidyl-2-C-methyl-D-erythritol kinase (302 aa).

K27 is a catalytic residue. Position 110-120 (110-120) interacts with ATP; that stretch reads PMGGGVGGGSS. Residue D152 is part of the active site.

The protein belongs to the GHMP kinase family. IspE subfamily.

It catalyses the reaction 4-CDP-2-C-methyl-D-erythritol + ATP = 4-CDP-2-C-methyl-D-erythritol 2-phosphate + ADP + H(+). It participates in isoprenoid biosynthesis; isopentenyl diphosphate biosynthesis via DXP pathway; isopentenyl diphosphate from 1-deoxy-D-xylulose 5-phosphate: step 3/6. Its function is as follows. Catalyzes the phosphorylation of the position 2 hydroxy group of 4-diphosphocytidyl-2C-methyl-D-erythritol. The protein is 4-diphosphocytidyl-2-C-methyl-D-erythritol kinase of Mannheimia succiniciproducens (strain KCTC 0769BP / MBEL55E).